The following is an 835-amino-acid chain: Cell division control protein 48 (835 aa).

Positions 1 to 21 are disordered; the sequence is MGEEHKPLLDASGVDPREEDK. 257 to 263 is an ATP binding site; the sequence is PGTGKTL. Glycyl lysine isopeptide (Lys-Gly) (interchain with G-Cter in ubiquitin) cross-links involve residues Lys305, Lys322, and Lys346. Asn358 and His394 together coordinate ATP. Ser472 and Ser519 each carry phosphoserine. Lys522 participates in a covalent cross-link: Glycyl lysine isopeptide (Lys-Gly) (interchain with G-Cter in ubiquitin). 531–536 contacts ATP; that stretch reads GTGKTL. Residues Lys539, Lys594, and Lys673 each participate in a glycyl lysine isopeptide (Lys-Gly) (interchain with G-Cter in ubiquitin) cross-link. The span at 720–729 shows a compositional bias: basic and acidic residues; sequence EAEKEVKVEG. Residues 720–746 form a disordered region; it reads EAEKEVKVEGEDVEMTDEGAKAEQEPE. Thr735 carries the phosphothreonine modification. Ser770 is modified (phosphoserine). The disordered stretch occupies residues 792–835; it reads SNFNFNDAPLGTTATDNANSNNSAPSGAGAAFGSNAEEDDDLYS. A compositionally biased stretch (low complexity) spans 802–826; sequence GTTATDNANSNNSAPSGAGAAFGSN.

Belongs to the AAA ATPase family. In terms of assembly, component of the heterotrimeric CDC48-NPL4-UFD1 ATPase complex. The CDC48-NPL4-UFD1 ATPase complex interacts with the HRD1 ubiquitin ligase complex composed of the E3 ligase HRD1, its cofactors HRD3, USA1 and DER1, substrate recruiting factor YOS9 and CDC48-binding protein UBX2. Interaction between the complexes is mediated by interaction between CDC48-NPL4-UFD1 complex member CDC48 and HRD1 complex member UBX2. Forms a complex composed of CDC48, NPL4, UFD1, UFD2 and SHP1. Forms a complex composed of CDC48, NPL4, UFD1, DOA1, SHP1 and deubiquitinase OTU1; within the complex interacts with DOA1/UFD3 and OTU1 to prevent multiubiquitination of substrates. Interacts with UFD2, to add further ubiquitin moieties; the interaction with UFD2 is prevented by DOA1/UFD3. Forms a complex composed of CDC48, DOA1, deubiquitinase UBP3 and probably BRE5; within the complex interacts with DOA1 and UBP3. Interacts (via C-terminus) with DOA1 (via PUL domain); the interaction is direct. Interacts with NPL4. Interacts with SHP1/UBX1, UBX2, UBX3, UBX4, UBX5, UBX6 and UBX7. Interacts with VMS1; the interaction recruits CDC48 to the mitochondria in response to mitochondrial stress. Component of the ribosome quality control complex (RQC), composed of the E3 ubiquitin ligase RKR1/LTN1, RQC1 and RQC2, as well as CDC48 and its ubiquitin-binding cofactors. RQC forms a stable complex with 60S ribosomal subunits. Interacts with ASE1 and CDC5; the interaction is likely to result in their degradation. Component of the DSCc E3 ligase complexes composed of at least TUL1, DSC2, DSC3, UBX3, CDC48 as well as VLD1 for the vacuole-localized complex or GLD1 for the Golgi/endosome-localized complex.

The protein resides in the microsome. Its subcellular location is the endoplasmic reticulum. It localises to the cytoplasm. The enzyme catalyses ATP + H2O = ADP + phosphate + H(+). With respect to regulation, the first ATP-binding region has low ATPase activity. The second ATP-binding region is responsible for ATPase activity. ATP binding to the first ATP-binding region induces intrinsic activity of the second ATP-binding region. While ATP binding to the first ATP-binding region appears to prevent ATP hydrolysis by the second ATP-binding region, ADP-binding to first region promotes the coordinate and cooperative ATPase cycle of the second ATP-binding region. ATP binding to the first ATP-binding region induces a conformational change, promoting the rotation of the first ATP-binding region relative to the second ATP-binding region in the hexamer. Its function is as follows. ATP-dependent chaperone which probably uses the energy provided by ATP hydrolysis to generate mechanical force to unfold substrate proteins, disassemble protein complexes, and disaggregate protein aggregates. By recruiting and promoting the degradation of ubiquitinated proteins, plays a role in the ubiquitin fusion degradation (UFD) pathway. Has a role in the endoplasmic reticulum-associated degradation (ERAD) pathway which mediates the cytoplasmic elimination of misfolded proteins exported from the ER. Required for the proteasome-dependent processing/activation of MGA2 and SPT23 transcription factors leading to the subsequent expression of OLE1. Has an additional role in the turnover of OLE1 where it targets ubiquitinated OLE1 and other proteins to the ERAD. Regulates ubiquitin-mediated mitochondria protein degradation. Involved in spindle disassembly probably by promoting the degradation of spindle assembly factors ASE1 and CDC5 at the end of mitosis. Component of the ribosome quality control complex (RQC), a ribosome-associated complex that mediates ubiquitination and extraction of incompletely synthesized nascent chains for proteasomal degradation. CDC48 may provide the mechanical force that dislodges the polyubiquitinated nascent peptides from the exit channel. Required for ribophagy, a process which relocalizes ribosomal particles into the vacuole for degradation in response to starvation. Component of the DSC E3 ubiquitin ligase complexes that tag proteins present in Golgi, endosome and vacuole membranes and function in protein homeostasis under non-stress conditions and support a role in protein quality control. Substrate initially binds through the attached polyubiquitin chain to UDF1/NPL4 and then moves through the pore of the ATPase rings and is thereby unfolded. Acts on a broad range of even well-folded proteins via ubiquitin-binding and unfolding to initiate substrate processing. Involved in degradation of mislocalized tail-anchored transmembrane proteins extracted from the mitochondrion outer membrane by MSP1 and ubiquitinated by DOA10. This Saccharomyces cerevisiae (strain ATCC 204508 / S288c) (Baker's yeast) protein is Cell division control protein 48.